The primary structure comprises 214 residues: Orotate phosphoribosyltransferase (214 aa).

Residues R125, K126, K129, H131, and E151–S159 each bind 5-phospho-alpha-D-ribose 1-diphosphate. Residues T155 and R183 each contribute to the orotate site.

Belongs to the purine/pyrimidine phosphoribosyltransferase family. PyrE subfamily. As to quaternary structure, homodimer. Mg(2+) is required as a cofactor.

The catalysed reaction is orotidine 5'-phosphate + diphosphate = orotate + 5-phospho-alpha-D-ribose 1-diphosphate. The protein operates within pyrimidine metabolism; UMP biosynthesis via de novo pathway; UMP from orotate: step 1/2. In terms of biological role, catalyzes the transfer of a ribosyl phosphate group from 5-phosphoribose 1-diphosphate to orotate, leading to the formation of orotidine monophosphate (OMP). In Tropheryma whipplei (strain Twist) (Whipple's bacillus), this protein is Orotate phosphoribosyltransferase.